Reading from the N-terminus, the 81-residue chain is Large ribosomal subunit protein uL23 (81 aa).

This sequence belongs to the universal ribosomal protein uL23 family. In terms of assembly, part of the 50S ribosomal subunit. Contacts protein L29.

Its function is as follows. Binds to 23S rRNA. One of the proteins that surrounds the polypeptide exit tunnel on the outside of the ribosome. This Saccharolobus solfataricus (strain ATCC 35092 / DSM 1617 / JCM 11322 / P2) (Sulfolobus solfataricus) protein is Large ribosomal subunit protein uL23.